The following is a 339-amino-acid chain: UDP-3-O-acylglucosamine N-acyltransferase (339 aa).

His-239 serves as the catalytic Proton acceptor.

It belongs to the transferase hexapeptide repeat family. LpxD subfamily. As to quaternary structure, homotrimer.

It catalyses the reaction a UDP-3-O-[(3R)-3-hydroxyacyl]-alpha-D-glucosamine + a (3R)-hydroxyacyl-[ACP] = a UDP-2-N,3-O-bis[(3R)-3-hydroxyacyl]-alpha-D-glucosamine + holo-[ACP] + H(+). The protein operates within bacterial outer membrane biogenesis; LPS lipid A biosynthesis. Functionally, catalyzes the N-acylation of UDP-3-O-acylglucosamine using 3-hydroxyacyl-ACP as the acyl donor. Is involved in the biosynthesis of lipid A, a phosphorylated glycolipid that anchors the lipopolysaccharide to the outer membrane of the cell. This Aliivibrio fischeri (strain ATCC 700601 / ES114) (Vibrio fischeri) protein is UDP-3-O-acylglucosamine N-acyltransferase.